Here is a 185-residue protein sequence, read N- to C-terminus: Ribosome-recycling factor (185 aa).

Belongs to the RRF family.

The protein resides in the cytoplasm. Responsible for the release of ribosomes from messenger RNA at the termination of protein biosynthesis. May increase the efficiency of translation by recycling ribosomes from one round of translation to another. This chain is Ribosome-recycling factor, found in Corynebacterium glutamicum (strain ATCC 13032 / DSM 20300 / JCM 1318 / BCRC 11384 / CCUG 27702 / LMG 3730 / NBRC 12168 / NCIMB 10025 / NRRL B-2784 / 534).